Consider the following 348-residue polypeptide: tRNA N6-adenosine threonylcarbamoyltransferase (348 aa).

Positions 111 and 115 each coordinate Fe cation. Substrate is bound by residues 134-138, aspartate 167, glycine 180, and asparagine 277; that span reads LISGG. Aspartate 305 serves as a coordination point for Fe cation.

The protein belongs to the KAE1 / TsaD family. The cofactor is Fe(2+).

It is found in the cytoplasm. The enzyme catalyses L-threonylcarbamoyladenylate + adenosine(37) in tRNA = N(6)-L-threonylcarbamoyladenosine(37) in tRNA + AMP + H(+). Required for the formation of a threonylcarbamoyl group on adenosine at position 37 (t(6)A37) in tRNAs that read codons beginning with adenine. Is involved in the transfer of the threonylcarbamoyl moiety of threonylcarbamoyl-AMP (TC-AMP) to the N6 group of A37, together with TsaE and TsaB. TsaD likely plays a direct catalytic role in this reaction. The protein is tRNA N6-adenosine threonylcarbamoyltransferase of Haemophilus ducreyi (strain 35000HP / ATCC 700724).